The chain runs to 156 residues: MSRRHSAEKREVLPDPKFGNIIVTKFMNSVMYAGKKSVAESIVYGAFGIIESKTKQNPLTVFEQALDNVMPTIEVRSRRVGGATYQVPVEVRSTRRQALGIRWLISAARDRNEKTMTERLSAELLDASNNRGNAVKKREDVHRMAEANRAFSHYRW.

It belongs to the universal ribosomal protein uS7 family. In terms of assembly, part of the 30S ribosomal subunit. Contacts proteins S9 and S11.

Its function is as follows. One of the primary rRNA binding proteins, it binds directly to 16S rRNA where it nucleates assembly of the head domain of the 30S subunit. Is located at the subunit interface close to the decoding center, probably blocks exit of the E-site tRNA. This Bradyrhizobium sp. (strain BTAi1 / ATCC BAA-1182) protein is Small ribosomal subunit protein uS7.